Consider the following 139-residue polypeptide: ATP synthase epsilon chain (139 aa).

The protein belongs to the ATPase epsilon chain family. As to quaternary structure, F-type ATPases have 2 components, CF(1) - the catalytic core - and CF(0) - the membrane proton channel. CF(1) has five subunits: alpha(3), beta(3), gamma(1), delta(1), epsilon(1). CF(0) has three main subunits: a, b and c.

It localises to the cell inner membrane. Produces ATP from ADP in the presence of a proton gradient across the membrane. The protein is ATP synthase epsilon chain of Actinobacillus pleuropneumoniae serotype 5b (strain L20).